We begin with the raw amino-acid sequence, 215 residues long: Histone-like protein 18C (215 aa).

The disordered stretch occupies residues 140–215 (CTPRKENKCS…PKSSKPKCSM (76 aa)). Basic residues-rich tracts occupy residues 149 to 190 (SKPR…RPRK) and 197 to 215 (AKAK…KCSM).

Functionally, not known. Encoded in the intron of cAMP-dependent protein kinase regulatory chain type I. The protein is Histone-like protein 18C (Mst77F) of Drosophila melanogaster (Fruit fly).